Consider the following 312-residue polypeptide: Eukaryotic translation initiation factor 2 subunit 2 (312 aa).

Disordered stretches follow at residues 26-104 and 125-146; these read AALG…NLDM and ADQADDDKSEDKENDEDNSSTW. Phosphoserine is present on Ser-44. Acidic residues-rich tracts occupy residues 90–102 and 125–142; these read AASEEPEEEEINL and ADQADDDKSEDKENDEDN. Ser-133 is subject to Phosphoserine. Phosphothreonine is present on Thr-145. A C4-type zinc finger spans residues 260-284; sequence CHTCRSPETILQKDTRLFFLQCESC.

The protein belongs to the eIF-2-beta/eIF-5 family. As to quaternary structure, eukaryotic translation initiation factor 2 eIF2 is a heterotrimeric complex composed of an alpha, a beta and a gamma subunit.

Its subcellular location is the cytoplasm. The protein resides in the cytosol. Functionally, component of the eIF2 complex that functions in the early steps of protein synthesis by forming a ternary complex with GTP and initiator tRNA. This complex binds to a 40S ribosomal subunit, followed by mRNA binding to form a 43S pre-initiation complex (43S PIC). Junction of the 60S ribosomal subunit to form the 80S initiation complex is preceded by hydrolysis of the GTP bound to eIF2 and release of an eIF2-GDP binary complex. In order for eIF2 to recycle and catalyze another round of initiation, the GDP bound to eIF2 must exchange with GTP by way of a reaction catalyzed by eIF2B. This Drosophila melanogaster (Fruit fly) protein is Eukaryotic translation initiation factor 2 subunit 2.